We begin with the raw amino-acid sequence, 102 residues long: Lipopolysaccharide assembly protein A (102 aa).

Residues 1–2 (MK) lie on the Cytoplasmic side of the membrane. A helical transmembrane segment spans residues 3 to 23 (YLLIFLLVLAIFVISVTLGAQ). Topologically, residues 24-43 (NDQQVTFNYLLAQGEYRIST) are periplasmic. The helical transmembrane segment at 44–64 (LLAVLFAAGFAIGWLICGLFW) threads the bilayer. A coiled-coil region spans residues 64 to 92 (WLRVRVSLARAERKIKRLENQLSPATDVA). Topologically, residues 65-102 (LRVRVSLARAERKIKRLENQLSPATDVAVVPHSSAAKE) are cytoplasmic.

The protein belongs to the LapA family.

Its subcellular location is the cell inner membrane. In terms of biological role, involved in the assembly of lipopolysaccharide (LPS). This chain is Lipopolysaccharide assembly protein A, found in Escherichia coli (strain K12).